The primary structure comprises 234 residues: Octanoyltransferase (234 aa).

One can recognise a BPL/LPL catalytic domain in the interval 43-231 (IPTRNYFLFV…HFQELFQAEL (189 aa)). Residues 88–95 (RGGDITYH), 160–162 (AMG), and 173–175 (GFA) contribute to the substrate site. Cys191 (acyl-thioester intermediate) is an active-site residue.

This sequence belongs to the LipB family.

It localises to the cytoplasm. It carries out the reaction octanoyl-[ACP] + L-lysyl-[protein] = N(6)-octanoyl-L-lysyl-[protein] + holo-[ACP] + H(+). The protein operates within protein modification; protein lipoylation via endogenous pathway; protein N(6)-(lipoyl)lysine from octanoyl-[acyl-carrier-protein]: step 1/2. Catalyzes the transfer of endogenously produced octanoic acid from octanoyl-acyl-carrier-protein onto the lipoyl domains of lipoate-dependent enzymes. Lipoyl-ACP can also act as a substrate although octanoyl-ACP is likely to be the physiological substrate. The sequence is that of Octanoyltransferase from Christiangramia forsetii (strain DSM 17595 / CGMCC 1.15422 / KT0803) (Gramella forsetii).